Consider the following 117-residue polypeptide: Prefoldin subunit beta (117 aa).

Belongs to the prefoldin subunit beta family. Heterohexamer of two alpha and four beta subunits.

The protein localises to the cytoplasm. Functionally, molecular chaperone capable of stabilizing a range of proteins. Seems to fulfill an ATP-independent, HSP70-like function in archaeal de novo protein folding. In Thermococcus gammatolerans (strain DSM 15229 / JCM 11827 / EJ3), this protein is Prefoldin subunit beta.